Here is a 335-residue protein sequence, read N- to C-terminus: Pyridoxal 5'-phosphate synthase subunit PdxS (335 aa).

D30 is a D-ribose 5-phosphate binding site. The active-site Schiff-base intermediate with D-ribose 5-phosphate is K87. G159 lines the D-ribose 5-phosphate pocket. Residue R171 coordinates D-glyceraldehyde 3-phosphate. D-ribose 5-phosphate is bound by residues G257 and 278–279; that span reads GS.

Belongs to the PdxS/SNZ family. In terms of assembly, in the presence of PdxT, forms a dodecamer of heterodimers.

It catalyses the reaction aldehydo-D-ribose 5-phosphate + D-glyceraldehyde 3-phosphate + L-glutamine = pyridoxal 5'-phosphate + L-glutamate + phosphate + 3 H2O + H(+). Its pathway is cofactor biosynthesis; pyridoxal 5'-phosphate biosynthesis. Functionally, catalyzes the formation of pyridoxal 5'-phosphate from ribose 5-phosphate (RBP), glyceraldehyde 3-phosphate (G3P) and ammonia. The ammonia is provided by the PdxT subunit. Can also use ribulose 5-phosphate and dihydroxyacetone phosphate as substrates, resulting from enzyme-catalyzed isomerization of RBP and G3P, respectively. This chain is Pyridoxal 5'-phosphate synthase subunit PdxS, found in Thermococcus kodakarensis (strain ATCC BAA-918 / JCM 12380 / KOD1) (Pyrococcus kodakaraensis (strain KOD1)).